The following is a 208-amino-acid chain: Small ribosomal subunit protein uS4 (208 aa).

Residues 28-48 are disordered; the sequence is YFEKRPYPPGEHGRARRRTES. The region spanning 95-159 is the S4 RNA-binding domain; the sequence is MRLDALVLRS…ARTPFQVAAA (65 aa).

This sequence belongs to the universal ribosomal protein uS4 family. As to quaternary structure, part of the 30S ribosomal subunit. Contacts protein S5. The interaction surface between S4 and S5 is involved in control of translational fidelity.

In terms of biological role, one of the primary rRNA binding proteins, it binds directly to 16S rRNA where it nucleates assembly of the body of the 30S subunit. Its function is as follows. With S5 and S12 plays an important role in translational accuracy. The chain is Small ribosomal subunit protein uS4 from Beutenbergia cavernae (strain ATCC BAA-8 / DSM 12333 / CCUG 43141 / JCM 11478 / NBRC 16432 / NCIMB 13614 / HKI 0122).